Reading from the N-terminus, the 432-residue chain is Putative D-alanyl-D-alanine carboxypeptidase (432 aa).

A helical; Signal-anchor transmembrane segment spans residues 7-25 (ATVLLTFSLSAFAVEYPVL).

The protein belongs to the peptidase S12 family. YfeW subfamily.

Its subcellular location is the cell inner membrane. It carries out the reaction Preferential cleavage: (Ac)2-L-Lys-D-Ala-|-D-Ala. Also transpeptidation of peptidyl-alanyl moieties that are N-acyl substituents of D-alanine.. The chain is Putative D-alanyl-D-alanine carboxypeptidase from Salmonella heidelberg (strain SL476).